The sequence spans 87 residues: Long neurotoxin LlLong (87 aa).

A signal peptide spans 1 to 20 (KTLLLTLVVVTIICLDFGYT). 5 disulfide bridges follow: Cys-23–Cys-41, Cys-34–Cys-62, Cys-47–Cys-51, Cys-66–Cys-77, and Cys-78–Cys-83.

Belongs to the three-finger toxin family. Long-chain subfamily. Type II alpha-neurotoxin sub-subfamily. As to expression, expressed by the venom gland.

It is found in the secreted. Binds with high affinity to muscular (alpha-1/CHRNA1) and neuronal (alpha-7/CHRNA7) nicotinic acetylcholine receptor (nAChR) and inhibits acetylcholine from binding to the receptor, thereby impairing neuromuscular and neuronal transmission. This chain is Long neurotoxin LlLong, found in Laticauda laticaudata (Blue-ringed sea krait).